The primary structure comprises 397 residues: Elongation factor Tu (397 aa).

In terms of domain architecture, tr-type G spans 10–207; it reads KPHVNVGTIG…TLDSYIPEPV (198 aa). The segment at 19–26 is G1; sequence GHVDHGKT. 19 to 26 contacts GTP; the sequence is GHVDHGKT. T26 provides a ligand contact to Mg(2+). Positions 60-64 are G2; the sequence is GITIN. Position 77 is a phosphotyrosine (Y77). The segment at 81–84 is G3; that stretch reads DCPG. 81 to 85 provides a ligand contact to GTP; it reads DCPGH. A Phosphotyrosine modification is found at Y88. A GTP-binding site is contributed by 136–139; sequence NKAD. Positions 136-139 are G4; the sequence is NKAD. The segment at 174–176 is G5; the sequence is SAL.

This sequence belongs to the TRAFAC class translation factor GTPase superfamily. Classic translation factor GTPase family. EF-Tu/EF-1A subfamily. In terms of assembly, monomer.

It localises to the cytoplasm. The enzyme catalyses GTP + H2O = GDP + phosphate + H(+). GTP hydrolase that promotes the GTP-dependent binding of aminoacyl-tRNA to the A-site of ribosomes during protein biosynthesis. The protein is Elongation factor Tu of Pseudomonas aeruginosa (strain UCBPP-PA14).